The chain runs to 347 residues: GMP reductase (347 aa).

An NADP(+)-binding site is contributed by 108–131; the sequence is ADFIKLSEILAMSEELNFICIDIA. Residues Gly-181 and Gly-183 each coordinate K(+). Cys-186 (thioimidate intermediate) is an active-site residue. Position 216 to 239 (216 to 239) interacts with NADP(+); it reads IIGDGGCSCAGDVAKAFGGGADFV.

It belongs to the IMPDH/GMPR family. GuaC type 1 subfamily. In terms of assembly, homotetramer.

It carries out the reaction IMP + NH4(+) + NADP(+) = GMP + NADPH + 2 H(+). Catalyzes the irreversible NADPH-dependent deamination of GMP to IMP. It functions in the conversion of nucleobase, nucleoside and nucleotide derivatives of G to A nucleotides, and in maintaining the intracellular balance of A and G nucleotides. The sequence is that of GMP reductase from Shewanella halifaxensis (strain HAW-EB4).